Consider the following 522-residue polypeptide: Insulinoma-associated protein 1 (522 aa).

Residues methionine 1–lysine 12 are compositionally biased toward basic residues. Residues methionine 1 to isoleucine 20 form an SNAG domain region. Disordered regions lie at residues methionine 1–histidine 112 and alanine 182–alanine 235. The tract at residues proline 2–valine 7 is required and sufficient for interaction with KDM1A. The segment at proline 43–proline 57 is necessary for interaction with CCND1. Residues proline 43–threonine 61 show a composition bias toward pro residues. Composition is skewed to low complexity over residues alanine 66 to alanine 75 and alanine 212 to proline 228. Residues phenylalanine 277–cysteine 297 form a C2H2-type 1; atypical zinc finger. The C2H2-type 2 zinc finger occupies tyrosine 305 to histidine 327. Residues arginine 325–serine 373 are disordered. Over residues cysteine 339–glutamate 351 the composition is skewed to basic and acidic residues. C2H2-type zinc fingers lie at residues tyrosine 378–histidine 400, histidine 453–histidine 476, and phenylalanine 481–histidine 504.

Belongs to the INSM1 family. Interacts (via the N-terminal region) with CCND1 (via cyclin N-terminal domain); the interaction competes with the binding of CCND1 to CDK4 during cell cycle progression and increases its transcriptional repressor activity. Interacts with HDAC3; the interaction increases its transcriptional repressor activity. Interacts (via the SNAG domain) with HDAC1. Interacts (via the SNAG domain) with HDAC2. Interacts (via the SNAG domain) with KDM1A. Interacts (via the SNAG domain) with RCOR1. Interacts with SORBS1.

It is found in the nucleus. Functionally, sequence-specific DNA-binding transcriptional regulator that plays a key role in neurogenesis and neuroendocrine cell differentiation during embryonic and/or fetal development. Binds to the consensus sequence 5'-[TG][TC][TC][TT][GA]GGG[CG]A-3' in target promoters. Acts as a transcriptional repressor of NEUROD1 and INS expression via its interaction with cyclin CCND1 in a cell cycle-independent manner. Negatively regulates skeletal muscle-specific gene expression in endocrine cells of the pituitary by inhibiting the Notch signaling pathway. Represses target gene transcription by recruiting chromatin-modifying factors, such as HDAC1, HDAC2, HDAC3, KDM1A and RCOR1 histone deacetylases. Binds to its own promoter, suggesting autoregulation as a self-control feedback mechanism. Competes with histone H3 for the same binding site on the histone demethylase complex formed by KDM1A and RCOR1, and thereby inhibits demethylation of histone H3 at 'Lys-4'. Promotes the generation and expansion of neuronal basal progenitor cells in the developing neocortex. Involved in the differentiation of endocrine cells of the developing anterior pituitary gland, of the pancreas and intestine, and of sympatho-adrenal cells in the peripheral nervous system. Promotes cell cycle signaling arrest and inhibition of cellular proliferation. The polypeptide is Insulinoma-associated protein 1 (INSM1) (Bos taurus (Bovine)).